Consider the following 304-residue polypeptide: uncharacterized protein (304 aa).

The tract at residues 1–183 (MTAPNEPGAL…ARVQLSARRS (183 aa)) is disordered. Residues 132 to 166 (PTPRAPQRNPAPARPAEGGAGSRGDSAAGSSGGRS) show a composition bias toward low complexity. 2 helical membrane-spanning segments follow: residues 206 to 226 (LLLSVALFFVWMITVAFLYLV) and 265 to 285 (FLIGLVNIVLMTALATIGAFV).

To M.leprae ML0007.

The protein resides in the cell membrane. This is an uncharacterized protein from Mycobacterium tuberculosis (strain ATCC 25618 / H37Rv).